A 914-amino-acid polypeptide reads, in one-letter code: TRPM8 channel-associated factor 3 (914 aa).

In terms of domain architecture, Peptidase M60 spans 533–832 (NSWVSTGLYL…TYLQLQEGFG (300 aa)).

Belongs to the TCAF family.

In terms of biological role, may play a role in the regulation of the cation channel TRPM8 activity. In Rattus norvegicus (Rat), this protein is TRPM8 channel-associated factor 3.